The sequence spans 287 residues: Pyridoxal 5'-phosphate synthase subunit PdxS (287 aa).

Position 21 (aspartate 21) interacts with D-ribose 5-phosphate. The active-site Schiff-base intermediate with D-ribose 5-phosphate is lysine 78. Residue glycine 150 coordinates D-ribose 5-phosphate. Arginine 162 lines the D-glyceraldehyde 3-phosphate pocket. Residues glycine 211 and 232–233 contribute to the D-ribose 5-phosphate site; that span reads GS.

This sequence belongs to the PdxS/SNZ family. As to quaternary structure, in the presence of PdxT, forms a dodecamer of heterodimers.

It carries out the reaction aldehydo-D-ribose 5-phosphate + D-glyceraldehyde 3-phosphate + L-glutamine = pyridoxal 5'-phosphate + L-glutamate + phosphate + 3 H2O + H(+). Its pathway is cofactor biosynthesis; pyridoxal 5'-phosphate biosynthesis. Catalyzes the formation of pyridoxal 5'-phosphate from ribose 5-phosphate (RBP), glyceraldehyde 3-phosphate (G3P) and ammonia. The ammonia is provided by the PdxT subunit. Can also use ribulose 5-phosphate and dihydroxyacetone phosphate as substrates, resulting from enzyme-catalyzed isomerization of RBP and G3P, respectively. This chain is Pyridoxal 5'-phosphate synthase subunit PdxS, found in Tropheryma whipplei (strain Twist) (Whipple's bacillus).